Here is an 85-residue protein sequence, read N- to C-terminus: Cell division topological specificity factor (85 aa).

The protein belongs to the MinE family.

Functionally, prevents the cell division inhibition by proteins MinC and MinD at internal division sites while permitting inhibition at polar sites. This ensures cell division at the proper site by restricting the formation of a division septum at the midpoint of the long axis of the cell. In Xanthomonas campestris pv. campestris (strain 8004), this protein is Cell division topological specificity factor.